The sequence spans 162 residues: Ribosome maturation factor RimP (162 aa).

This sequence belongs to the RimP family.

Its subcellular location is the cytoplasm. In terms of biological role, required for maturation of 30S ribosomal subunits. The polypeptide is Ribosome maturation factor RimP (Streptococcus gordonii (strain Challis / ATCC 35105 / BCRC 15272 / CH1 / DL1 / V288)).